The primary structure comprises 1270 residues: Nuclear exosome regulator NRDE2 (1270 aa).

2 disordered regions span residues 1 to 22 and 119 to 209; these read MFRA…ENPD and SVKS…HTLM. Residues 119–135 show a composition bias toward polar residues; the sequence is SVKSLNGCQDPPETSQQ. A compositionally biased stretch (basic residues) spans 164–184; the sequence is QRSRSREKKRRKKERRRKRSS. Positions 192-204 are enriched in basic and acidic residues; sequence RSRDRSSRARDTS.

Belongs to the NRDE2 family. In terms of assembly, interacts with nrde-3.

It is found in the nucleus. It localises to the nucleus speckle. The protein localises to the nucleolus. Its function is as follows. Protein of the nuclear speckles that regulates RNA exosomal degradation. Involved in short interfering RNAs-mediated silencing in nuclei. Functions with nrde-3 in the nuclear RNA-mediated gene silencing (RNAi) pathway to regulate gene expression via inhibition of RNA polymerases I and II during the elongation phase of transcription. Required for exogenous RNAi-induced H3K27 methylation. The chain is Nuclear exosome regulator NRDE2 (nrde-2) from Caenorhabditis elegans.